Here is a 302-residue protein sequence, read N- to C-terminus: Possible hemolysin C (302 aa).

CBS domains lie at 79-141 and 144-201; these read MVPR…NFRL and LIRK…IDDE.

Belongs to the UPF0053 family. Hemolysin C subfamily.

The polypeptide is Possible hemolysin C (tlyC) (Rickettsia bellii (strain OSU 85-389)).